The sequence spans 1122 residues: Receptor-type guanylate cyclase gcy-5 (1122 aa).

Positions 1–19 are cleaved as a signal peptide; it reads MRLLYFSMVLLWVLGASEC. At 20–486 the chain is on the extracellular side; that stretch reads QVIPSSRRTL…CPVQFWDQYG (467 aa). 7 N-linked (GlcNAc...) asparagine glycosylation sites follow: asparagine 252, asparagine 299, asparagine 344, asparagine 350, asparagine 378, asparagine 434, and asparagine 439. A helical membrane pass occupies residues 487–507; it reads VLIFVASIVLIFLICIMLMCF. Residues 508–1122 lie on the Cytoplasmic side of the membrane; it reads GFMIRGRRAE…KSKMDTLKVV (615 aa). The interval 536–562 is disordered; the sequence is QKEKRKPNSRRSLQSGPSTITGESKMT. The Protein kinase domain maps to 542 to 830; it reads PNSRRSLQSG…NTNLMDHVFN (289 aa). The segment covering 545–559 has biased composition (polar residues); the sequence is RRSLQSGPSTITGES. The Guanylate cyclase domain maps to 888–1018; sequence TVLFSDVVKF…DTVNTASRME (131 aa). The tract at residues 1071–1122 is disordered; sequence SDTKSLSTRTTPPITDENWPPQMKEDLKKRAVTPYPERQRSGKSKMDTLKVV. The span at 1074–1083 shows a compositional bias: polar residues; the sequence is KSLSTRTTPP. The span at 1107–1122 shows a compositional bias: basic and acidic residues; sequence ERQRSGKSKMDTLKVV.

It belongs to the adenylyl cyclase class-4/guanylyl cyclase family. Expressed in both ASEL and ASER neurons during early embryonic stages and becomes specifically expressed in ASER neuron in early larval stage.

It is found in the cell membrane. It catalyses the reaction GTP = 3',5'-cyclic GMP + diphosphate. Guanylate cyclase involved in the production of the second messenger cGMP. Unlike other guanylate cyclases expressed in ASE neurons, may not play a role in chemotaxis responses to salt ions mediated by ASE sensory neurons. The polypeptide is Receptor-type guanylate cyclase gcy-5 (Caenorhabditis elegans).